The primary structure comprises 492 residues: Pentatricopeptide repeat-containing protein At4g21705, mitochondrial (492 aa).

Residues 1–17 constitute a mitochondrion transit peptide; the sequence is MNILRRIPANLIASRYY. 8 PPR repeats span residues 125 to 159, 160 to 194, 195 to 225, 231 to 261, 266 to 296, 301 to 335, 336 to 370, and 371 to 405; these read NDKTYGALLNCYVRQQNVEKSLLHFEKMKEMGFVT, SSLTYNNIMCLYTNIGQHEKVPKVLEEMKEENVAP, DNYSYRICINAFGAMYDLERIGGTLRDMERR, DWNTYAVAAKFYIDGGDCDRAVELLKMSENR, DGEGYNHLITLYARLGKKIEVLRLWDLEKDV, INQDYLTVLQSLVKIDALVEAEEVLTEWKSSGNCY, DFRVPNTVIRGYIGKSMEEKAEAMLEDLARRGKAT, and TPESWELVATAYAEKGTLENAFKCMKTALGVEVGS.

It belongs to the PPR family. P subfamily.

It localises to the mitochondrion. This is Pentatricopeptide repeat-containing protein At4g21705, mitochondrial from Arabidopsis thaliana (Mouse-ear cress).